Here is a 443-residue protein sequence, read N- to C-terminus: MRQFEDYVLESFDHTTGWYQDNSYESLNRTADQLMQFRLPTGLKLSFSSLATPNFSTSYHLGAGGRFDGSICYLFSSVPLKNVVSSSESIPLTALLRSYRQVQDLPPFQPSHGAVPPAPTPTPGERLQEFVKQPWLVFGRMFLPESMLEAQVVKRASPNLRFQVKGVSQADLPNGGTILGSVQYTKPRYGVAGLLSTDGGLLGFRGLYNFGGDTTPTTSSPRAVGGDENGGANGCDERERIYGRFSAGGELYYGVLNKSAGASLGVRFATLPAHSGTPLTATFTLAPLMGNISSSFAVMARQSCSLATRFDFNVYSYESDWTIGMELWGKGRMAGLIDRRLEEEEAQIVPVDMGPAEKKRERSFQAKMEWRLDEDDETEPPLPNKREEEFSGVLKARMDQHSKVGLLWEGRLKSLIFSLGTSVNLSKPEQSFRSLGLAIQYSS.

This sequence belongs to the MDM10 family. In terms of assembly, component of the ER-mitochondria encounter structure (ERMES) or MDM complex, composed of MMM1, MDM10, MDM12 and MDM34. Associates with the mitochondrial outer membrane sorting assembly machinery SAM(core) complex.

Its subcellular location is the mitochondrion outer membrane. Component of the ERMES/MDM complex, which serves as a molecular tether to connect the endoplasmic reticulum and mitochondria. Components of this complex are involved in the control of mitochondrial shape and protein biogenesis and may function in phospholipid exchange. MDM10 is involved in the late assembly steps of the general translocase of the mitochondrial outer membrane (TOM complex). Functions in the TOM40-specific route of the assembly of outer membrane beta-barrel proteins, including the association of TOM40 with the receptor TOM22 and small TOM proteins. Can associate with the SAM(core) complex as well as the MDM12-MMM1 complex, both involved in late steps of the major beta-barrel assembly pathway, that is responsible for biogenesis of all outer membrane beta-barrel proteins. May act as a switch that shuttles between both complexes and channels precursor proteins into the TOM40-specific pathway. Plays a role in mitochondrial morphology and in the inheritance of mitochondria. This Pyricularia oryzae (strain 70-15 / ATCC MYA-4617 / FGSC 8958) (Rice blast fungus) protein is Mitochondrial distribution and morphology protein 10.